A 429-amino-acid chain; its full sequence is Trigger factor (429 aa).

The 86-residue stretch at G161–P246 folds into the PPIase FKBP-type domain.

This sequence belongs to the FKBP-type PPIase family. Tig subfamily.

It localises to the cytoplasm. It catalyses the reaction [protein]-peptidylproline (omega=180) = [protein]-peptidylproline (omega=0). Functionally, involved in protein export. Acts as a chaperone by maintaining the newly synthesized protein in an open conformation. Functions as a peptidyl-prolyl cis-trans isomerase. The sequence is that of Trigger factor from Ruthia magnifica subsp. Calyptogena magnifica.